The sequence spans 555 residues: CTP synthase (555 aa).

The interval 1-265 (MTRYIFITGG…GNRVCEKLNI (265 aa)) is amidoligase domain. Residue Ser-13 coordinates CTP. Ser-13 is a UTP binding site. Residues 14–19 (SLGKGI) and Asp-71 contribute to the ATP site. Mg(2+) contacts are provided by Asp-71 and Glu-139. CTP contacts are provided by residues 146 to 148 (DIE), 186 to 191 (KTKPTQ), and Lys-222. Residues 186–191 (KTKPTQ) and Lys-222 each bind UTP. Positions 290 to 541 (TVAVVGKYVD…IKAGLAAKEA (252 aa)) constitute a Glutamine amidotransferase type-1 domain. Gly-351 is a binding site for L-glutamine. Residue Cys-378 is the Nucleophile; for glutamine hydrolysis of the active site. Residues 379–382 (LGMQ), Glu-402, and Arg-469 contribute to the L-glutamine site. Active-site residues include His-514 and Glu-516.

Belongs to the CTP synthase family. As to quaternary structure, homotetramer.

It catalyses the reaction UTP + L-glutamine + ATP + H2O = CTP + L-glutamate + ADP + phosphate + 2 H(+). The catalysed reaction is L-glutamine + H2O = L-glutamate + NH4(+). It carries out the reaction UTP + NH4(+) + ATP = CTP + ADP + phosphate + 2 H(+). It participates in pyrimidine metabolism; CTP biosynthesis via de novo pathway; CTP from UDP: step 2/2. Its activity is regulated as follows. Allosterically activated by GTP, when glutamine is the substrate; GTP has no effect on the reaction when ammonia is the substrate. The allosteric effector GTP functions by stabilizing the protein conformation that binds the tetrahedral intermediate(s) formed during glutamine hydrolysis. Inhibited by the product CTP, via allosteric rather than competitive inhibition. Catalyzes the ATP-dependent amination of UTP to CTP with either L-glutamine or ammonia as the source of nitrogen. Regulates intracellular CTP levels through interactions with the four ribonucleotide triphosphates. The protein is CTP synthase of Coxiella burnetii (strain RSA 493 / Nine Mile phase I).